Here is a 218-residue protein sequence, read N- to C-terminus: Eukaryotic translation initiation factor 3 subunit K (218 aa).

One can recognise a PCI domain in the interval tyrosine 44 to lysine 205.

This sequence belongs to the eIF-3 subunit K family. In terms of assembly, component of the eukaryotic translation initiation factor 3 (eIF-3) complex.

It localises to the cytoplasm. In terms of biological role, component of the eukaryotic translation initiation factor 3 (eIF-3) complex, which is involved in protein synthesis of a specialized repertoire of mRNAs and, together with other initiation factors, stimulates binding of mRNA and methionyl-tRNAi to the 40S ribosome. The eIF-3 complex specifically targets and initiates translation of a subset of mRNAs involved in cell proliferation. This chain is Eukaryotic translation initiation factor 3 subunit K, found in Bombyx mori (Silk moth).